Reading from the N-terminus, the 209-residue chain is Putative amino acid efflux protein YcgF (209 aa).

The next 6 membrane-spanning stretches (helical) occupy residues 1 to 21, 39 to 59, 62 to 82, 110 to 130, 147 to 167, and 184 to 204; these read MNIF…VGPV, IFGL…YFGL, FLTA…VLTY, FASG…WLGI, LLIY…CMAI, and LTGI…YQGI.

This sequence belongs to the Rht family.

Its subcellular location is the cell membrane. The protein is Putative amino acid efflux protein YcgF (ycgF) of Bacillus subtilis (strain 168).